A 124-amino-acid polypeptide reads, in one-letter code: Large ribosomal subunit protein bL12 (124 aa).

The disordered stretch occupies residues lysine 99–lysine 124. The span at glycine 101 to leucine 114 shows a compositional bias: basic and acidic residues. Positions glutamate 115–lysine 124 are enriched in low complexity.

Belongs to the bacterial ribosomal protein bL12 family. As to quaternary structure, homodimer. Part of the ribosomal stalk of the 50S ribosomal subunit. Forms a multimeric L10(L12)X complex, where L10 forms an elongated spine to which 2 to 4 L12 dimers bind in a sequential fashion. Binds GTP-bound translation factors.

In terms of biological role, forms part of the ribosomal stalk which helps the ribosome interact with GTP-bound translation factors. Is thus essential for accurate translation. The sequence is that of Large ribosomal subunit protein bL12 from Campylobacter hominis (strain ATCC BAA-381 / DSM 21671 / CCUG 45161 / LMG 19568 / NCTC 13146 / CH001A).